The primary structure comprises 1335 residues: Aldehyde oxidase 3 (1335 aa).

One can recognise a 2Fe-2S ferredoxin-type domain in the interval 8–95; the sequence is DELIFFVNGK…GAAVTTVEGI (88 aa). [2Fe-2S] cluster is bound by residues Cys47, Cys52, Cys55, and Cys77. Residue Gln116 coordinates Mo-molybdopterin. [2Fe-2S] cluster is bound by residues Cys117, Cys120, Cys152, and Cys154. The FAD-binding PCMH-type domain occupies 236-421; sequence FRGERTTWIA…ISVFVPRSSK (186 aa). 264–271 provides a ligand contact to FAD; that stretch reads LVIGNTYL. Ser320 is subject to Phosphoserine. FAD-binding residues include Ser354, His358, Asp367, and Leu411. Mo-molybdopterin-binding residues include Ala802, Leu1043, and Gln1199. Glu1266 (proton acceptor; for azaheterocycle hydroxylase activity) is an active-site residue.

This sequence belongs to the xanthine dehydrogenase family. As to quaternary structure, homodimer. [2Fe-2S] cluster is required as a cofactor. Requires FAD as cofactor. The cofactor is Mo-molybdopterin. Highly expressed in liver (at protein level). In liver, the expression is greater in males than females.

The protein localises to the cytoplasm. It catalyses the reaction an aldehyde + O2 + H2O = a carboxylate + H2O2 + H(+). Inhibited by potassium cyanide, menadione, benzamidine, raloxifene and norharmane. Oxidase with broad substrate specificity, oxidizing aromatic azaheterocycles, such as N1-methylnicotinamide and phthalazine, as well as aldehydes, such as benzaldehyde, retinal and pyridoxal. Plays a key role in the metabolism of xenobiotics and drugs containing aromatic azaheterocyclic substituents. Is probably involved in the regulation of reactive oxygen species homeostasis. May be a prominent source of superoxide generation via the one-electron reduction of molecular oxygen. May also catalyze nitric oxide (NO) production via the reduction of nitrite to NO with NADH or aldehyde as electron donor. The polypeptide is Aldehyde oxidase 3 (Aox3) (Mus musculus (Mouse)).